Reading from the N-terminus, the 438-residue chain is Serine hydroxymethyltransferase 1 (438 aa).

(6S)-5,6,7,8-tetrahydrofolate contacts are provided by residues L130 and 134–136; that span reads GHL. K239 is modified (N6-(pyridoxal phosphate)lysine).

Belongs to the SHMT family. Homodimer. Requires pyridoxal 5'-phosphate as cofactor.

It localises to the cytoplasm. It catalyses the reaction (6R)-5,10-methylene-5,6,7,8-tetrahydrofolate + glycine + H2O = (6S)-5,6,7,8-tetrahydrofolate + L-serine. The protein operates within one-carbon metabolism; tetrahydrofolate interconversion. It participates in amino-acid biosynthesis; glycine biosynthesis; glycine from L-serine: step 1/1. In terms of biological role, catalyzes the reversible interconversion of serine and glycine with tetrahydrofolate (THF) serving as the one-carbon carrier. This reaction serves as the major source of one-carbon groups required for the biosynthesis of purines, thymidylate, methionine, and other important biomolecules. Also exhibits THF-independent aldolase activity toward beta-hydroxyamino acids, producing glycine and aldehydes, via a retro-aldol mechanism. This is Serine hydroxymethyltransferase 1 from Mycobacterium tuberculosis (strain CDC 1551 / Oshkosh).